The following is a 319-amino-acid chain: ATP-dependent 6-phosphofructokinase (319 aa).

ATP is bound at residue glycine 11. 21–25 provides a ligand contact to ADP; that stretch reads RAVVR. ATP-binding positions include 72–73 and 102–105; these read RY and GDGS. Aspartate 103 lines the Mg(2+) pocket. A substrate-binding site is contributed by 125 to 127; sequence TID. Residue aspartate 127 is the Proton acceptor of the active site. Arginine 154 serves as a coordination point for ADP. Substrate is bound by residues arginine 162 and 169–171; that span reads MGR. ADP is bound by residues 185-187, arginine 211, and 213-215; these read GAE and KKH. Residues glutamate 222, arginine 243, and 249-252 each bind substrate; that span reads HVQR.

This sequence belongs to the phosphofructokinase type A (PFKA) family. ATP-dependent PFK group I subfamily. Prokaryotic clade 'B1' sub-subfamily. As to quaternary structure, homotetramer. Requires Mg(2+) as cofactor.

The protein resides in the cytoplasm. The catalysed reaction is beta-D-fructose 6-phosphate + ATP = beta-D-fructose 1,6-bisphosphate + ADP + H(+). It functions in the pathway carbohydrate degradation; glycolysis; D-glyceraldehyde 3-phosphate and glycerone phosphate from D-glucose: step 3/4. With respect to regulation, allosterically activated by ADP and other diphosphonucleosides, and allosterically inhibited by phosphoenolpyruvate. Functionally, catalyzes the phosphorylation of D-fructose 6-phosphate to fructose 1,6-bisphosphate by ATP, the first committing step of glycolysis. The chain is ATP-dependent 6-phosphofructokinase from Listeria monocytogenes serotype 4a (strain HCC23).